We begin with the raw amino-acid sequence, 75 residues long: DNA-directed RNA polymerase subunit omega (75 aa).

It belongs to the RNA polymerase subunit omega family. As to quaternary structure, in cyanobacteria the RNAP catalytic core is composed of 2 alpha, 1 beta, 1 beta', 1 gamma and 1 omega subunit. When a sigma factor is associated with the core the holoenzyme is formed, which can initiate transcription.

The catalysed reaction is RNA(n) + a ribonucleoside 5'-triphosphate = RNA(n+1) + diphosphate. In terms of biological role, promotes RNA polymerase assembly. Latches the N- and C-terminal regions of the beta' subunit thereby facilitating its interaction with the beta and alpha subunits. The sequence is that of DNA-directed RNA polymerase subunit omega from Gloeothece citriformis (strain PCC 7424) (Cyanothece sp. (strain PCC 7424)).